We begin with the raw amino-acid sequence, 338 residues long: MNLQRFPRYPLTFGPTPIQPLARLSKHLGGKVHLYAKREDCNSGLAFGGNKTRKLEYLIPEVLAQGCDTLVSIGGIQSNQTRQVAAVAAHLGMKCVLVQENWVNYSDAVYDRVGNIQMSRILGADVRLVPDGFDIGFRKSWEEALESVRAAGGKPYAIPAGCSDHPLGGLGFVGFAEEVRQQEAELGFKFDYVVVCSVTGSTQAGMVVGFAADGRADRVIGIDASAKPAQTREQITRIARQTAEKVGLGRDITSEDVVLDERFAGPEYGLPNDGTLEAIRLCARMEGVLTDPVYEGKSMHGMIEMVRNGEFPEGSRVLYAHLGGVPALNGYSFIFRNG.

Lysine 51 carries the N6-(pyridoxal phosphate)lysine modification. Serine 78 acts as the Nucleophile in catalysis.

It belongs to the ACC deaminase/D-cysteine desulfhydrase family. As to quaternary structure, homotrimer. Pyridoxal 5'-phosphate serves as cofactor.

The catalysed reaction is 1-aminocyclopropane-1-carboxylate + H2O = 2-oxobutanoate + NH4(+). Functionally, catalyzes a cyclopropane ring-opening reaction, the irreversible conversion of 1-aminocyclopropane-1-carboxylate (ACC) to ammonia and alpha-ketobutyrate. Allows growth on ACC as a nitrogen source. This is 1-aminocyclopropane-1-carboxylate deaminase from Paraburkholderia xenovorans (strain LB400).